Consider the following 167-residue polypeptide: Histone H2A.Z-specific chaperone CHZ1 (167 aa).

2 disordered regions span residues 1-116 (MSDE…IITT) and 131-167 (AEELDKERGVVAEEDEEEEEEEEKENEDDDFKEQVQN). 2 stretches are compositionally biased toward basic and acidic residues: residues 16 to 44 (KPQEEQDTEKESLTNSEESKKRAVEPSTD) and 60 to 75 (ELEKEEAKEKNAKTEN). Residues 76 to 110 (NEEGDDDEDDEDDDYEQGKLEDEEEEEDELLEIDE) show a composition bias toward acidic residues. Basic and acidic residues predominate over residues 131-141 (AEELDKERGVV). The segment covering 142-161 (AEEDEEEEEEEEKENEDDDF) has biased composition (acidic residues).

Belongs to the CHZ1 family. In terms of assembly, forms a heterotrimer with H2A.Z-H2B, stabilizing the association of the histone dimer. Also, with a lower affinity, forms a heterotrimer with H2A-H2B.

It localises to the nucleus. Functionally, forms a chaperone-bound H2A.Z-H2B complex that acts as a source for SWR1 complex-dependent H2A to H2A.Z histone replacement in chromatin. This Candida albicans (strain SC5314 / ATCC MYA-2876) (Yeast) protein is Histone H2A.Z-specific chaperone CHZ1 (CHZ1).